Here is a 692-residue protein sequence, read N- to C-terminus: Proprotein convertase subtilisin/kexin type 9 (692 aa).

A signal peptide spans 1 to 30 (MGTVSSRRSWWPLPLLLLLLLLLGPAGARA). The propeptide occupies 31 to 152 (QEDEDGDYEE…IEEDSSVFAQ (122 aa)). A Sulfotyrosine modification is found at Tyr38. Phosphoserine is present on Ser47. The region spanning 77–149 (TYVVVLKEET…VDYIEEDSSV (73 aa)) is the Inhibitor I9 domain. A Peptidase S8 domain is found at 155 to 461 (PWNLERITPP…GWQLFCRTVW (307 aa)). Residues Asp186 and His226 each act as charge relay system in the active site. 2 disulfide bridges follow: Cys223–Cys255 and Cys323–Cys358. Ser386 functions as the Charge relay system in the catalytic mechanism. A C-terminal domain region spans residues 450-692 (GAGWQLFCRT…HLAQASQELQ (243 aa)). 3 disulfide bridges follow: Cys457–Cys527, Cys477–Cys526, and Cys486–Cys509. Asn533 carries N-linked (GlcNAc...) asparagine glycosylation. 6 disulfide bridges follow: Cys534–Cys601, Cys552–Cys600, Cys562–Cys588, Cys608–Cys679, Cys626–Cys678, and Cys635–Cys654. Position 688 is a phosphoserine (Ser688).

It belongs to the peptidase S8 family. As to quaternary structure, monomer. Can self-associate to form dimers and higher multimers which may have increased LDLR degrading activity. The precursor protein but not the mature protein may form multimers. Interacts with APOB, VLDLR, LRP8/APOER2 and BACE1. The full-length immature form (pro-PCSK9) interacts with SCNN1A, SCNN1B and SCNN1G. The pro-PCSK9 form (via C-terminal domain) interacts with LDLR. Interacts (via the C-terminal domain) with ANXA2 (via repeat Annexin 1); the interaction inhibits the degradation of LDLR. The cofactor is Ca(2+). Post-translationally, cleavage by furin and PCSK5 generates a truncated inactive protein that is unable to induce LDLR degradation. Undergoes autocatalytic cleavage in the endoplasmic reticulum to release the propeptide from the N-terminus and the cleavage of the propeptide is strictly required for its maturation and activation. The cleaved propeptide however remains associated with the catalytic domain through non-covalent interactions, preventing potential substrates from accessing its active site. As a result, it is secreted from cells as a propeptide-containing, enzymatically inactive protein. In terms of processing, phosphorylation protects the propeptide against proteolysis.

It localises to the cytoplasm. The protein localises to the secreted. It is found in the endosome. Its subcellular location is the lysosome. The protein resides in the cell surface. It localises to the endoplasmic reticulum. The protein localises to the golgi apparatus. Its activity is regulated as follows. Its proteolytic activity is autoinhibited by the non-covalent binding of the propeptide to the catalytic domain. Inhibited by EGTA. Functionally, crucial player in the regulation of plasma cholesterol homeostasis. Binds to low-density lipid receptor family members: low density lipoprotein receptor (LDLR), very low density lipoprotein receptor (VLDLR), apolipoprotein E receptor (LRP1/APOER) and apolipoprotein receptor 2 (LRP8/APOER2), and promotes their degradation in intracellular acidic compartments. Acts via a non-proteolytic mechanism to enhance the degradation of the hepatic LDLR through a clathrin LDLRAP1/ARH-mediated pathway. May prevent the recycling of LDLR from endosomes to the cell surface or direct it to lysosomes for degradation. Can induce ubiquitination of LDLR leading to its subsequent degradation. Inhibits intracellular degradation of APOB via the autophagosome/lysosome pathway in a LDLR-independent manner. Involved in the disposal of non-acetylated intermediates of BACE1 in the early secretory pathway. Inhibits epithelial Na(+) channel (ENaC)-mediated Na(+) absorption by reducing ENaC surface expression primarily by increasing its proteasomal degradation. Regulates neuronal apoptosis via modulation of LRP8/APOER2 levels and related anti-apoptotic signaling pathways. This chain is Proprotein convertase subtilisin/kexin type 9 (PCSK9), found in Pan troglodytes (Chimpanzee).